A 317-amino-acid chain; its full sequence is 8-oxo-(d)GTP phosphatase (317 aa).

Positions 15-148 (RIVYAAGAVL…DRKVLCRFAK (134 aa)) constitute a Nudix hydrolase domain. Substrate is bound by residues 43-46 (RPRY), Asp-48, and 53-55 (KGK). Positions 53, 69, and 73 each coordinate Mg(2+). The Nudix box signature appears at 54–75 (GKVDPGETAPVGAVREILEETG). 4 residues coordinate substrate: Tyr-89, Lys-99, Glu-118, and Tyr-136. Residue Glu-118 participates in Mg(2+) binding.

This sequence belongs to the Nudix hydrolase family. Mg(2+) serves as cofactor.

It carries out the reaction 8-oxo-dGTP + H2O = 8-oxo-dGDP + phosphate + H(+). The enzyme catalyses 8-oxo-GTP + H2O = 8-oxo-GDP + phosphate + H(+). Functionally, catalyzes the conversion of 8-oxo-dGTP to 8-oxo-dGDP, and 8-oxo-GTP to 8-oxo-GDP. This chain is 8-oxo-(d)GTP phosphatase, found in Mycobacterium tuberculosis (strain CDC 1551 / Oshkosh).